The sequence spans 235 residues: Aspartate/glutamate leucyltransferase (235 aa).

Belongs to the R-transferase family. Bpt subfamily.

It is found in the cytoplasm. The catalysed reaction is N-terminal L-glutamyl-[protein] + L-leucyl-tRNA(Leu) = N-terminal L-leucyl-L-glutamyl-[protein] + tRNA(Leu) + H(+). It carries out the reaction N-terminal L-aspartyl-[protein] + L-leucyl-tRNA(Leu) = N-terminal L-leucyl-L-aspartyl-[protein] + tRNA(Leu) + H(+). In terms of biological role, functions in the N-end rule pathway of protein degradation where it conjugates Leu from its aminoacyl-tRNA to the N-termini of proteins containing an N-terminal aspartate or glutamate. This chain is Aspartate/glutamate leucyltransferase, found in Pseudomonas putida (strain ATCC 700007 / DSM 6899 / JCM 31910 / BCRC 17059 / LMG 24140 / F1).